The following is a 240-amino-acid chain: MQDPNEDTEWNEILRNFGILPPKEEPKDEIEEMVLRLQQEAMVKPYEKMTLAQLKEAEDEFDEEDIKAIEIYREKRLQEWKALKKKQKFGELREISGNQYVNEVTNAEKDLWVVIHLYRSSVPMCLVVNQHLSVLARKFPETKFVKAIVNSCIEHYHDNCLPTIFVYKNGQIEGKFIGIIECGGINLKLEELEWKLSEVGAIQSDLEENPKKGIADMMVSSIRNISIYDSDSSGSDTEAK.

The region spanning Gln-38 to Ala-201 is the Phosducin domain. The thioredoxin fold stretch occupies residues Phe-89 to Lys-240.

Belongs to the phosducin family. Interacts with the CCT chaperonin complex and actin. Testis-specific (at protein level).

Its subcellular location is the endoplasmic reticulum. Essential for male fertility, spermiogenesis and acrosome formation. The protein is Phosducin-like protein 2 (Pdcl2) of Mus musculus (Mouse).